A 284-amino-acid chain; its full sequence is Dihydropteroate synthase (284 aa).

The 260-residue stretch at 6–265 (VQVIGVLNVT…DVRASVDALK (260 aa)) folds into the Pterin-binding domain. Asn-13 lines the Mg(2+) pocket. Residues Thr-53, Asp-86, Asn-105, Asp-177, Lys-213, and 253 to 255 (RVH) contribute to the (7,8-dihydropterin-6-yl)methyl diphosphate site.

This sequence belongs to the DHPS family. Homodimer. The cofactor is Mg(2+).

It carries out the reaction (7,8-dihydropterin-6-yl)methyl diphosphate + 4-aminobenzoate = 7,8-dihydropteroate + diphosphate. It participates in cofactor biosynthesis; tetrahydrofolate biosynthesis; 7,8-dihydrofolate from 2-amino-4-hydroxy-6-hydroxymethyl-7,8-dihydropteridine diphosphate and 4-aminobenzoate: step 1/2. With respect to regulation, is potently inhibited by the sulfone dapsone and the two sulfonamides sulfamethoxazole and sulfamethoxypyridazine, with Kis in the range of 12 to 32 nM. To a lesser extent, is also inhibited by p-aminosalicylate (PAS). Functionally, catalyzes the condensation of para-aminobenzoate (pABA) with 6-hydroxymethyl-7,8-dihydropterin diphosphate (DHPt-PP) to form 7,8-dihydropteroate, the immediate precursor of folate derivatives. The protein is Dihydropteroate synthase (folP1) of Mycobacterium leprae (strain TN).